The primary structure comprises 91 residues: Small ribosomal subunit protein uS19 (91 aa).

It belongs to the universal ribosomal protein uS19 family.

Functionally, protein S19 forms a complex with S13 that binds strongly to the 16S ribosomal RNA. This is Small ribosomal subunit protein uS19 from Lactiplantibacillus plantarum (strain ATCC BAA-793 / NCIMB 8826 / WCFS1) (Lactobacillus plantarum).